We begin with the raw amino-acid sequence, 432 residues long: Adenylosuccinate synthetase (432 aa).

Residues 13–19 and 41–43 contribute to the GTP site; these read GDEGKGK and GHT. The active-site Proton acceptor is aspartate 14. Mg(2+)-binding residues include aspartate 14 and glycine 41. Residues 14-17, 39-42, threonine 130, arginine 144, glutamine 225, threonine 240, and arginine 304 contribute to the IMP site; these read DEGK and NAGH. Histidine 42 acts as the Proton donor in catalysis. 300 to 306 is a binding site for substrate; it reads ATTGRKR. GTP contacts are provided by residues arginine 306, 332–334, and 415–417; these read KLD and STG.

It belongs to the adenylosuccinate synthetase family. As to quaternary structure, homodimer. Mg(2+) serves as cofactor.

The protein resides in the cytoplasm. It carries out the reaction IMP + L-aspartate + GTP = N(6)-(1,2-dicarboxyethyl)-AMP + GDP + phosphate + 2 H(+). Its pathway is purine metabolism; AMP biosynthesis via de novo pathway; AMP from IMP: step 1/2. Plays an important role in the de novo pathway of purine nucleotide biosynthesis. Catalyzes the first committed step in the biosynthesis of AMP from IMP. The sequence is that of Adenylosuccinate synthetase from Tolumonas auensis (strain DSM 9187 / NBRC 110442 / TA 4).